A 295-amino-acid polypeptide reads, in one-letter code: Polyisoprenoid diphosphate/phosphate phosphohydrolase PLPP6 (295 aa).

Disordered stretches follow at residues 1 to 39 and 61 to 90; these read MPSPRRSMEGRPLGVSASSSSSSPGSPAHGGGGGGSRFE and SESPVHRRGSFPLAAAGPSQSPAPPLPEED. Residues 1-132 are Cytoplasmic-facing; the sequence is MPSPRRSMEG…ESSSWGSVRP (132 aa). Residues 16–27 are compositionally biased toward low complexity; it reads SASSSSSSPGSP. Phosphoserine is present on residues serine 26, serine 36, and serine 70. Residues 133–153 traverse the membrane as a helical segment; sequence LMKLLEISGHGIPWLLGTLYC. The Lumenal segment spans residues 154-164; that stretch reads LCRSDSWAGRE. A helical membrane pass occupies residues 165–185; sequence VLMNLLFALLLDLLLVALIKG. A phosphatase sequence motif I region spans residues 184–192; that stretch reads KGLVRRRRP. The Cytoplasmic portion of the chain corresponds to 186–228; it reads LVRRRRPAHNQMDMFVTLSVDKYSFPSGHATRAALMSRFILNH. Positions 211–214 are phosphatase sequence motif II; that stretch reads PSGH. The active-site Proton donors is the histidine 214. Residues 229 to 249 form a helical membrane-spanning segment; sequence LVLAIPLRVLVVLWAFVLGLS. The interval 249 to 260 is phosphatase sequence motif III; that stretch reads SRVMLGRHNVTD. Over 250-260 the chain is Lumenal; the sequence is RVMLGRHNVTD. The active-site Nucleophile is the histidine 256. Residues 261–281 form a helical membrane-spanning segment; that stretch reads VAFGFFLGYMQYSIVDYCWLS. Residues 282–295 are Cytoplasmic-facing; that stretch reads PHNAPVLFLLWSQR.

Belongs to the PA-phosphatase related phosphoesterase family. In terms of processing, phosphorylation by PKC activates the phosphatase activity towards presqualene diphosphate. In terms of tissue distribution, widely expressed. Expressed in most organs, in particular gastrointestinal organs, spleen, placenta, kidney, thymus and brain.

It is found in the endoplasmic reticulum membrane. The protein localises to the nucleus envelope. The protein resides in the nucleus inner membrane. It catalyses the reaction presqualene diphosphate + H2O = presqualene phosphate + phosphate + H(+). The enzyme catalyses presqualene phosphate + H2O = presqualene alcohol + phosphate. It carries out the reaction (2E,6E)-farnesyl diphosphate + H2O = (2E,6E)-farnesyl phosphate + phosphate + H(+). The catalysed reaction is (2E,6E)-farnesyl phosphate + H2O = (2E,6E)-farnesol + phosphate. It catalyses the reaction (2E,6E,10E)-geranylgeranyl diphosphate + H2O = (2E,6E,10E)-geranylgeranyl phosphate + phosphate + H(+). The enzyme catalyses (2E,6E,10E)-geranylgeranyl phosphate + H2O = (2E,6E,10E)-geranylgeraniol + phosphate. It carries out the reaction (2E)-geranyl diphosphate + H2O = (2E)-geranyl phosphate + phosphate + H(+). The catalysed reaction is (2E)-geranyl phosphate + H2O = (2E)-geraniol + phosphate. It catalyses the reaction 1,2-dihexadecanoyl-sn-glycero-3-phosphate + H2O = 1,2-dihexadecanoyl-sn-glycerol + phosphate. Its activity is regulated as follows. Inhibited by propranolol. Not inhibited by N-ethylmaleimide or bromoenolactome. Its function is as follows. Magnesium-independent polyisoprenoid diphosphatase that catalyzes the sequential dephosphorylation of presqualene, farnesyl, geranyl and geranylgeranyl diphosphates. Functions in the innate immune response through the dephosphorylation of presqualene diphosphate which acts as a potent inhibitor of the signaling pathways contributing to polymorphonuclear neutrophils activation. May regulate the biosynthesis of cholesterol and related sterols by dephosphorylating presqualene and farnesyl diphosphate, two key intermediates in this biosynthetic pathway. May also play a role in protein prenylation by acting on farnesyl diphosphate and its derivative geranylgeranyl diphosphate, two precursors for the addition of isoprenoid anchors to membrane proteins. Has a lower activity towards phosphatidic acid (PA), but through phosphatidic acid dephosphorylation may participate in the biosynthesis of phospholipids and triacylglycerols. May also act on ceramide-1-P, lysophosphatidic acid (LPA) and sphing-4-enine 1-phosphate/sphingosine-1-phosphate. This is Polyisoprenoid diphosphate/phosphate phosphohydrolase PLPP6 from Homo sapiens (Human).